The chain runs to 254 residues: Ankyrin repeat domain-containing protein 7 (254 aa).

ANK repeat units follow at residues Lys-58–Val-87, Glu-91–Leu-120, Arg-124–Ala-153, Asp-157–Ala-186, and Tyr-190–Tyr-219.

Testis specific.

The polypeptide is Ankyrin repeat domain-containing protein 7 (ANKRD7) (Homo sapiens (Human)).